The sequence spans 823 residues: Spindle pole body component SPC97 (823 aa).

Belongs to the TUBGCP family. As to quaternary structure, interacts with TUB4, SPC72 and SPC98.

The protein resides in the nucleus. The protein localises to the cytoplasm. It is found in the cytoskeleton. It localises to the microtubule organizing center. Its subcellular location is the spindle pole body. Its function is as follows. Involved in microtubule organization by the microtubule organizing center, the spindle pole body (SPB). Probably part of the microtubule attachment site at the SPB. The protein is Spindle pole body component SPC97 (SPC97) of Saccharomyces cerevisiae (strain ATCC 204508 / S288c) (Baker's yeast).